We begin with the raw amino-acid sequence, 933 residues long: Valine--tRNA ligase (933 aa).

The 'HIGH' region motif lies at 58–68 (PNVTGSLHMGH). The 'KMSKS' region signature appears at 556 to 560 (KMSKS). ATP is bound at residue K559. 2 coiled-coil regions span residues 807–833 (VTKNQNLLNLLKKATQDIQALTRANKV) and 864–933 (EGLV…LGLK).

The protein belongs to the class-I aminoacyl-tRNA synthetase family. ValS type 1 subfamily. Monomer.

It is found in the cytoplasm. It carries out the reaction tRNA(Val) + L-valine + ATP = L-valyl-tRNA(Val) + AMP + diphosphate. Functionally, catalyzes the attachment of valine to tRNA(Val). As ValRS can inadvertently accommodate and process structurally similar amino acids such as threonine, to avoid such errors, it has a 'posttransfer' editing activity that hydrolyzes mischarged Thr-tRNA(Val) in a tRNA-dependent manner. In Prochlorococcus marinus (strain SARG / CCMP1375 / SS120), this protein is Valine--tRNA ligase.